The following is a 208-amino-acid chain: CKLF-like MARVEL transmembrane domain-containing protein 4 (208 aa).

The segment covering 1–11 has biased composition (acidic residues); it reads MRGGEELDGFE. The interval 1–38 is disordered; it reads MRGGEELDGFEGEASSTSMISGASSPYQPTTEPVSQRR. Positions 15-25 are enriched in low complexity; that stretch reads SSTSMISGASS. The MARVEL domain maps to 49 to 176; that stretch reads YLRGALGRLK…STFLAMQKWR (128 aa). A run of 4 helical transmembrane segments spans residues 59 to 79, 85 to 105, 123 to 143, and 151 to 171; these read VAQV…MECS, YFFE…LILF, LVNT…LAAL, and IAAV…TFLA. Ser194 bears the Phosphoserine mark.

Belongs to the chemokine-like factor family. As to quaternary structure, interacts with PD1L1 and CMTM6.

The protein resides in the membrane. In terms of biological role, acts as a backup for CMTM6 to regulate plasma membrane expression of PD-L1/CD274, an immune inhibitory ligand critical for immune tolerance to self and antitumor immunity. May protect PD-L1/CD274 from being polyubiquitinated and targeted for degradation. In Mus musculus (Mouse), this protein is CKLF-like MARVEL transmembrane domain-containing protein 4.